The sequence spans 323 residues: Staphylococcal-like nuclease CAN1 (323 aa).

Gly2 carries N-myristoyl glycine lipidation. Residue Cys11 is the site of S-palmitoyl cysteine attachment. In terms of domain architecture, TNase-like spans 130–306 (NTLPVDTKSV…RQKRVGLWAS (177 aa)). Asp143 serves as a coordination point for Ca(2+). The active site involves Arg213. Ca(2+) is bound at residue Asp218. Active-site residues include Glu221 and Arg255.

The protein belongs to the thermonuclease family. Ca(2+) serves as cofactor.

The protein localises to the cell membrane. Inhibited by Zn(2+). In terms of biological role, enzyme that catalyzes the hydrolysis of both DNA and RNA at the 5' position of the phosphodiester bond. Possesses activity toward the single-stranded DNA, double-stranded DNA and RNA. May be involved in genomic DNA degradation during programmed cell death. This Arabidopsis thaliana (Mouse-ear cress) protein is Staphylococcal-like nuclease CAN1 (CAN1).